We begin with the raw amino-acid sequence, 281 residues long: Diaminopimelate epimerase (281 aa).

The substrate site is built by asparagine 13, glutamine 46, and asparagine 66. Cysteine 75 functions as the Proton donor in the catalytic mechanism. Residues 76 to 77 (GN), asparagine 160, asparagine 193, and 211 to 212 (ER) contribute to the substrate site. The Proton acceptor role is filled by cysteine 220. 221 to 222 (GT) provides a ligand contact to substrate.

It belongs to the diaminopimelate epimerase family. As to quaternary structure, homodimer.

Its subcellular location is the cytoplasm. The catalysed reaction is (2S,6S)-2,6-diaminopimelate = meso-2,6-diaminopimelate. It functions in the pathway amino-acid biosynthesis; L-lysine biosynthesis via DAP pathway; DL-2,6-diaminopimelate from LL-2,6-diaminopimelate: step 1/1. Its function is as follows. Catalyzes the stereoinversion of LL-2,6-diaminopimelate (L,L-DAP) to meso-diaminopimelate (meso-DAP), a precursor of L-lysine and an essential component of the bacterial peptidoglycan. The sequence is that of Diaminopimelate epimerase from Acinetobacter baumannii (strain ATCC 17978 / DSM 105126 / CIP 53.77 / LMG 1025 / NCDC KC755 / 5377).